The chain runs to 389 residues: Probable family 17 glucosidase SCW10 (389 aa).

The first 18 residues, 1-18 (MRFSNFLTVSALLTGALG), serve as a signal peptide directing secretion. A propeptide spanning residues 19–29 (APAVRHKHEKR) is cleaved from the precursor. The tract at residues 70–134 (ASQATTSTLE…SSASSSISAS (65 aa)) is disordered. The N-linked (GlcNAc...) asparagine glycan is linked to Asn279. Glu326 acts as the Nucleophile in catalysis.

This sequence belongs to the glycosyl hydrolase 17 family. In terms of processing, glycosylated.

It is found in the secreted. The protein localises to the cell wall. In terms of biological role, glucanases possibly play a role in cell expansion during growth, in cell-cell fusion during mating, and in spore release during sporulation. The chain is Probable family 17 glucosidase SCW10 (SCW10) from Saccharomyces cerevisiae (strain ATCC 204508 / S288c) (Baker's yeast).